A 131-amino-acid chain; its full sequence is UPF0102 protein H16_A3579 (131 aa).

Belongs to the UPF0102 family.

The chain is UPF0102 protein H16_A3579 from Cupriavidus necator (strain ATCC 17699 / DSM 428 / KCTC 22496 / NCIMB 10442 / H16 / Stanier 337) (Ralstonia eutropha).